The following is a 768-amino-acid chain: 5-methyltetrahydropteroyltriglutamate--homocysteine methyltransferase (768 aa).

Residues 17-20 and lysine 117 each bind 5-methyltetrahydropteroyltri-L-glutamate; that span reads RELK. L-homocysteine-binding positions include 442–444 and glutamate 495; that span reads IGS. L-methionine-binding positions include 442–444 and glutamate 495; that span reads IGS. 5-methyltetrahydropteroyltri-L-glutamate is bound by residues 526-527 and tryptophan 572; that span reads RC. Aspartate 610 is an L-homocysteine binding site. Aspartate 610 lines the L-methionine pocket. Glutamate 616 provides a ligand contact to 5-methyltetrahydropteroyltri-L-glutamate. Zn(2+)-binding residues include histidine 653, cysteine 655, and glutamate 677. Catalysis depends on histidine 706, which acts as the Proton donor. Cysteine 738 contacts Zn(2+).

Belongs to the vitamin-B12 independent methionine synthase family. The cofactor is Zn(2+).

The catalysed reaction is 5-methyltetrahydropteroyltri-L-glutamate + L-homocysteine = tetrahydropteroyltri-L-glutamate + L-methionine. Its pathway is amino-acid biosynthesis; L-methionine biosynthesis via de novo pathway; L-methionine from L-homocysteine (MetE route): step 1/1. In terms of biological role, catalyzes the transfer of a methyl group from 5-methyltetrahydrofolate to homocysteine resulting in methionine formation. This Bifidobacterium adolescentis (strain ATCC 15703 / DSM 20083 / NCTC 11814 / E194a) protein is 5-methyltetrahydropteroyltriglutamate--homocysteine methyltransferase.